A 1033-amino-acid polypeptide reads, in one-letter code: Isoleucine--tRNA ligase 2 (1033 aa).

The short motif at Pro-47–His-57 is the 'HIGH' region element. The 'KMSKS' region signature appears at Lys-590–Ser-594. Lys-593 lines the ATP pocket.

It belongs to the class-I aminoacyl-tRNA synthetase family. IleS type 2 subfamily. As to quaternary structure, monomer. Zn(2+) serves as cofactor.

It localises to the cytoplasm. It carries out the reaction tRNA(Ile) + L-isoleucine + ATP = L-isoleucyl-tRNA(Ile) + AMP + diphosphate. In terms of biological role, catalyzes the attachment of isoleucine to tRNA(Ile). As IleRS can inadvertently accommodate and process structurally similar amino acids such as valine, to avoid such errors it has two additional distinct tRNA(Ile)-dependent editing activities. One activity is designated as 'pretransfer' editing and involves the hydrolysis of activated Val-AMP. The other activity is designated 'posttransfer' editing and involves deacylation of mischarged Val-tRNA(Ile). This chain is Isoleucine--tRNA ligase 2, found in Bacillus thuringiensis subsp. konkukian (strain 97-27).